The primary structure comprises 1073 residues: ATP-dependent helicase/deoxyribonuclease subunit B (1073 aa).

Belongs to the helicase family. AddB/RexB type 2 subfamily. In terms of assembly, heterodimer of AddA and RexB. It depends on Mg(2+) as a cofactor.

Functionally, the heterodimer acts as both an ATP-dependent DNA helicase and an ATP-dependent, dual-direction single-stranded exonuclease. Recognizes the chi site generating a DNA molecule suitable for the initiation of homologous recombination. This subunit has 5' -&gt; 3' nuclease activity but not helicase activity. This chain is ATP-dependent helicase/deoxyribonuclease subunit B, found in Streptococcus equi subsp. zooepidemicus (strain H70).